The chain runs to 201 residues: Adenylyl-sulfate kinase (201 aa).

35–42 (GLSGSGKS) provides a ligand contact to ATP. The Phosphoserine intermediate role is filled by S109.

It belongs to the APS kinase family.

The enzyme catalyses adenosine 5'-phosphosulfate + ATP = 3'-phosphoadenylyl sulfate + ADP + H(+). The protein operates within sulfur metabolism; hydrogen sulfide biosynthesis; sulfite from sulfate: step 2/3. Its function is as follows. Catalyzes the synthesis of activated sulfate. The chain is Adenylyl-sulfate kinase from Escherichia coli (strain ATCC 8739 / DSM 1576 / NBRC 3972 / NCIMB 8545 / WDCM 00012 / Crooks).